The chain runs to 185 residues: Ribosome-recycling factor (185 aa).

The protein belongs to the RRF family.

It localises to the cytoplasm. Its function is as follows. Responsible for the release of ribosomes from messenger RNA at the termination of protein biosynthesis. May increase the efficiency of translation by recycling ribosomes from one round of translation to another. The polypeptide is Ribosome-recycling factor (Pseudomonas putida (strain ATCC 700007 / DSM 6899 / JCM 31910 / BCRC 17059 / LMG 24140 / F1)).